Reading from the N-terminus, the 944-residue chain is Serine/threonine-protein kinase ATG1 (944 aa).

Positions 24–327 constitute a Protein kinase domain; the sequence is FNIGSEIGKG…FENFFTHQVV (304 aa). ATP-binding positions include 30–38 and Lys-53; that span reads IGKGSFAQV. Asp-167 serves as the catalytic Proton acceptor. A disordered region spans residues 344–423; that stretch reads RQESRDPRSA…NSPREGGEGL (80 aa). Positions 356-367 are enriched in low complexity; it reads SGSPSLSSRSPR. The LIR signature appears at 428–431; that stretch reads PVAQ. 5 disordered regions span residues 443–475, 512–572, 777–801, 860–895, and 925–944; these read YDSV…PITE, LGDA…GSAS, QLPD…AGSP, EGSG…EEAH, and AVRR…HASS. 2 stretches are compositionally biased toward polar residues: residues 447 to 459 and 516 to 549; these read TGRN…TSLL and SQRS…NALA. A compositionally biased stretch (low complexity) spans 563–572; it reads SLSASPGSAS. Over residues 785–801 the composition is skewed to polar residues; sequence HPSNHGTESIASSAGSP. Basic and acidic residues predominate over residues 865-881; the sequence is ETRRLSTGKEAEREAVK. The interval 924–930 is required for Cvt trafficking; the sequence is QAVRRRS.

It belongs to the protein kinase superfamily. Ser/Thr protein kinase family. APG1/unc-51/ULK1 subfamily. As to quaternary structure, homodimer. Dimerization requires the presence of ATG13. Forms a ternary complex with ATG13 and ATG17.

The protein resides in the cytoplasm. Its subcellular location is the preautophagosomal structure membrane. It catalyses the reaction L-seryl-[protein] + ATP = O-phospho-L-seryl-[protein] + ADP + H(+). It carries out the reaction L-threonyl-[protein] + ATP = O-phospho-L-threonyl-[protein] + ADP + H(+). Functionally, serine/threonine protein kinase involved in the cytoplasm to vacuole transport (Cvt) and found to be essential in autophagy, where it is required for the formation of autophagosomes. Involved in the clearance of protein aggregates which cannot be efficiently cleared by the proteasome. Required for selective autophagic degradation of the nucleus (nucleophagy) as well as for mitophagy which contributes to regulate mitochondrial quantity and quality by eliminating the mitochondria to a basal level to fulfill cellular energy requirements and preventing excess ROS production. Also involved in endoplasmic reticulum-specific autophagic process, in selective removal of ER-associated degradation (ERAD) substrates. Plays a key role in ATG9 and ATG23 cycling through the pre-autophagosomal structure and is necessary to promote ATG18 binding to ATG9 through phosphorylation of ATG9. Catalyzes phosphorylation of ATG4, decreasing the interaction between ATG4 and ATG8 and impairing deconjugation of PE-conjugated forms of ATG8. Autophagy is required for proper vegetative growth, asexual/sexual reproduction, and full virulence. Autophagy is particularly involved in the biosynthesis of deoxynivalenol (DON), an important virulence determinant. This chain is Serine/threonine-protein kinase ATG1, found in Gibberella zeae (strain ATCC MYA-4620 / CBS 123657 / FGSC 9075 / NRRL 31084 / PH-1) (Wheat head blight fungus).